The primary structure comprises 163 residues: Lipoprotein signal peptidase (163 aa).

Helical transmembrane passes span 4-24 (SAALFCRPVPAILFILSLLIL), 66-86 (LDAWVIVVMRLAIVAFVAWLW), and 92-112 (DHQFAHLGYCLIIAGAFGNII). Active-site residues include Asp-122 and Asp-140. The chain crosses the membrane as a helical span at residues 132-152 (SFAVFNLADSLITIGAGFILL).

It belongs to the peptidase A8 family.

Its subcellular location is the cell inner membrane. The catalysed reaction is Release of signal peptides from bacterial membrane prolipoproteins. Hydrolyzes -Xaa-Yaa-Zaa-|-(S,diacylglyceryl)Cys-, in which Xaa is hydrophobic (preferably Leu), and Yaa (Ala or Ser) and Zaa (Gly or Ala) have small, neutral side chains.. It functions in the pathway protein modification; lipoprotein biosynthesis (signal peptide cleavage). Its function is as follows. This protein specifically catalyzes the removal of signal peptides from prolipoproteins. This chain is Lipoprotein signal peptidase, found in Allorhizobium ampelinum (strain ATCC BAA-846 / DSM 112012 / S4) (Agrobacterium vitis (strain S4)).